The sequence spans 703 residues: Arylphorin subunit beta (703 aa).

The signal sequence occupies residues 1–16 (MKTVIILAGLVALALG). Asn72 and Asn211 each carry an N-linked (GlcNAc...) asparagine glycan.

Belongs to the hemocyanin family. Arylphorin is a hexamer of subunits alpha and beta. In terms of tissue distribution, fat body.

It localises to the secreted. Its subcellular location is the extracellular space. Arylphorin is a larval storage protein (LSP) which may serve as a storage protein used primarily as a source of aromatic amino acids for protein synthesis during metamorphosis. It is a constituent of the sclerotizing system of the cuticle, and serves as a carrier for ecdysteroid hormone. This chain is Arylphorin subunit beta, found in Manduca sexta (Tobacco hawkmoth).